Consider the following 324-residue polypeptide: Rho crystallin (324 aa).

T2 is subject to N-acetylthreonine. 218–281 provides a ligand contact to NADP(+); it reads SVLGSHRDRN…SFTPARIKQN (64 aa).

This sequence belongs to the aldo/keto reductase family. Monomer.

This chain is Rho crystallin, found in Rana temporaria (European common frog).